The chain runs to 251 residues: MNLNSIPAFQDNYIWVLTNDEGRCVIVDPGEAAPVLKAIAAHKWMPEAIFLTHHHYDHVGGVKELLQHFPQMTVYGPAETQDKGATHLVGDGDTIRVLGEKFTLFATPGHTLGHVCYFSHPYLFCGDTLFSGGCGRLFEGTPSQMYQSLMKINSLPDDTLICSAHEYTLANIKFALSILPHDSFINEYYRKVKELRVKKQMTLPVILKNERKINLFLRTEDIDLINEINKETILQQPEARFAWLRSKKDTF.

7 residues coordinate Zn(2+): histidine 53, histidine 55, aspartate 57, histidine 58, histidine 110, aspartate 127, and histidine 165.

It belongs to the metallo-beta-lactamase superfamily. Glyoxalase II family. In terms of assembly, monomer. Zn(2+) is required as a cofactor.

It catalyses the reaction an S-(2-hydroxyacyl)glutathione + H2O = a 2-hydroxy carboxylate + glutathione + H(+). The protein operates within secondary metabolite metabolism; methylglyoxal degradation; (R)-lactate from methylglyoxal: step 2/2. Its function is as follows. Thiolesterase that catalyzes the hydrolysis of S-D-lactoyl-glutathione to form glutathione and D-lactic acid. The polypeptide is Hydroxyacylglutathione hydrolase (Salmonella typhi).